Consider the following 382-residue polypeptide: Anhydro-N-acetylmuramic acid kinase (382 aa).

9–16 (GTSLDGID) serves as a coordination point for ATP.

Belongs to the anhydro-N-acetylmuramic acid kinase family.

The catalysed reaction is 1,6-anhydro-N-acetyl-beta-muramate + ATP + H2O = N-acetyl-D-muramate 6-phosphate + ADP + H(+). It functions in the pathway amino-sugar metabolism; 1,6-anhydro-N-acetylmuramate degradation. The protein operates within cell wall biogenesis; peptidoglycan recycling. Its function is as follows. Catalyzes the specific phosphorylation of 1,6-anhydro-N-acetylmuramic acid (anhMurNAc) with the simultaneous cleavage of the 1,6-anhydro ring, generating MurNAc-6-P. Is required for the utilization of anhMurNAc either imported from the medium or derived from its own cell wall murein, and thus plays a role in cell wall recycling. The chain is Anhydro-N-acetylmuramic acid kinase from Bacillus cereus (strain AH820).